Reading from the N-terminus, the 627-residue chain is MACPF domain-containing protein At1g14780 (627 aa).

Residues Met1–Leu339 enclose the MACPF domain.

The protein belongs to the complement C6/C7/C8/C9 (TC 1.C.39) family.

Negatively controls the salicylic acid (SA)-mediated pathway of programmed cell death in plant immunity. This chain is MACPF domain-containing protein At1g14780, found in Arabidopsis thaliana (Mouse-ear cress).